A 367-amino-acid chain; its full sequence is Phosphoribosylaminoimidazole-succinocarboxamide synthase (367 aa).

This sequence belongs to the SAICAR synthetase family.

It catalyses the reaction 5-amino-1-(5-phospho-D-ribosyl)imidazole-4-carboxylate + L-aspartate + ATP = (2S)-2-[5-amino-1-(5-phospho-beta-D-ribosyl)imidazole-4-carboxamido]succinate + ADP + phosphate + 2 H(+). It participates in purine metabolism; IMP biosynthesis via de novo pathway; 5-amino-1-(5-phospho-D-ribosyl)imidazole-4-carboxamide from 5-amino-1-(5-phospho-D-ribosyl)imidazole-4-carboxylate: step 1/2. This is Phosphoribosylaminoimidazole-succinocarboxamide synthase from Aliivibrio salmonicida (strain LFI1238) (Vibrio salmonicida (strain LFI1238)).